Consider the following 469-residue polypeptide: Asparagine--tRNA ligase (469 aa).

Belongs to the class-II aminoacyl-tRNA synthetase family. Homodimer.

It localises to the cytoplasm. The catalysed reaction is tRNA(Asn) + L-asparagine + ATP = L-asparaginyl-tRNA(Asn) + AMP + diphosphate + H(+). The polypeptide is Asparagine--tRNA ligase (Porphyromonas gingivalis (strain ATCC 33277 / DSM 20709 / CIP 103683 / JCM 12257 / NCTC 11834 / 2561)).